Here is a 147-residue protein sequence, read N- to C-terminus: Bis(5'-nucleosyl)-tetraphosphatase [asymmetrical] (147 aa).

Alanine 2 is modified (N-acetylalanine). The 138-residue stretch at 2-139 (ALRACGLIIF…EMKAALQEGH (138 aa)) folds into the Nudix hydrolase domain. The Nudix box motif lies at 43–64 (GHVEPGESDLETALRETQEEAG).

The protein belongs to the Nudix hydrolase family. A divalent metal cation is required as a cofactor.

It carries out the reaction P(1),P(4)-bis(5'-guanosyl) tetraphosphate + H2O = GMP + GTP + 2 H(+). It catalyses the reaction a 5'-end CoA-ribonucleoside in mRNA + H2O = a 5'-end phospho-adenosine-phospho-ribonucleoside in mRNA + (R)-4'-phosphopantetheine + 2 H(+). The catalysed reaction is a 5'-end FAD-phospho-ribonucleoside in mRNA + H2O = a 5'-end phospho-adenosine-phospho-ribonucleoside in mRNA + FMN + 2 H(+). Functionally, catalyzes the asymmetric hydrolysis of diadenosine 5',5'''-P1,P4-tetraphosphate (Ap4A) to yield AMP and ATP. Exhibits decapping activity towards FAD-capped RNAs and dpCoA-capped RNAs in vitro. In Bos taurus (Bovine), this protein is Bis(5'-nucleosyl)-tetraphosphatase [asymmetrical] (NUDT2).